The sequence spans 353 residues: Tectonin-2 (353 aa).

The Ricin B-type lectin domain maps to 44 to 93 (WIFDNDGYIRLAANHNLVLDVNGGAAKEGNTVLSYPDKKDHAKNQLWVNK). 6 consecutive repeat copies span residues 138–173 (SAWERHEGELNVVAVGAGNHDVWGVNHLEHIYHWDG), 174–210 (SKWHQIEGAATNISVGLDGTVWCVNKAHEIYRLDRGT), 211–247 (NKWSIVPGELVQVSVGNSHNIWGVNHLDAIYKWNADS), 248–282 (NSWTFVDGQLTNVSVGHDGTVYGVNRAGNIYHYNG), 283–318 (NSWDAVSGELVQIHVANKDLIVGVNKAGHVYRLKHG), and 319–353 (KDWEKLEGELSWVAVGHGGELWGANSAHNIYKALL). Residues 138 to 353 (SAWERHEGEL…SAHNIYKALL (216 aa)) are 6 X approximate tandem repeats.

It belongs to the tectonin family.

The protein resides in the cell surface. Its subcellular location is the cytoplasmic vesicle membrane. Its function is as follows. Probably involved in bacterial recognition. May be a lectin that function as part of a transmembrane signaling complex during phagocytosis. This Physarum polycephalum (Slime mold) protein is Tectonin-2 (TECB).